Consider the following 704-residue polypeptide: Translational regulator orb2 (704 aa).

Residues 1-64 form a disordered region; it reads MDSLKLPKAN…PPGLGSSTPI (64 aa). Residues 1-87 are gln/His-rich; it reads MDSLKLPKAN…ILQSFHHSKH (87 aa). A compositionally biased stretch (low complexity) spans 9–42; that stretch reads ANSATSSASGSNSNLSGSTSASASAATSPTSSGT. A phosphoserine mark is found at Ser-74, Ser-88, and Ser-100. Disordered stretches follow at residues 82–106, 166–266, and 417–438; these read FHHS…SNLL, LPNL…GVSP, and SPSR…GGNV. The segment at 163–240 is gln/His-rich; sequence CGGLPNLNLN…PSSPGGGGGG (78 aa). 3 stretches are compositionally biased toward low complexity: residues 176–205, 218–233, and 417–429; these read QLHQ…QQQL, QQQQ…SPSS, and SPSR…PHSP. Residues Ser-425 and Ser-428 each carry the phosphoserine modification. RRM domains are found at residues 447–538 and 555–637; these read RKVF…PWRL and KTVF…PYVL.

As to quaternary structure, monomer. Upon neuronal stimulation, forms stable amyloid-like oligomers composed of isoform A and isoform B which are required for formation of persistent long-term memory. Isoform A is critical for oligomer formation. Phe-5 of isoform A is required for amyloid-like oligomerization. Rapidly forms amyloids and toxic intermediates are extremely transient. Unlike in the adult nervous system, remains monomeric in the early embryo. Interacts with the translational regulator bol. Interacts with Tob; the interaction is enhanced by neuronal stimulation, stabilizes isoform A and induces oligomerization. Phosphorylation regulates interaction with Tob and oligomerization. Protein phosphatase 2A keeps both Orb2 and Tob in an unphosphorylated form. Following synaptic activation, unphosphorylated Orb2 is bound and stabilized by unphosphorylated Tob. Tob recruits activated LimK which phosphorylates both Orb2 and Tob and enhances Orb2 oligomerization. As to expression, broadly expressed throughout the nervous system of embryo, larva and adult including the ventral nerve cord and brain (at protein level). In early embryos, deposited maternally and distributed uniformly throughout the embryo until the extended germband stage. By mid-embryogenesis, highest levels are found in the central and peripheral nervous systems with lower expression also detected in the ectoderm and mesoderm. In adults, high levels are present in the head and body of both sexes with higher expression in testis than ovary. In the ovary, expressed in both germ and follicle cells. In adult head, predominantly neuronal with broad expression throughout the brain and ventral ganglia including the mushroom body.

Its subcellular location is the perikaryon. It is found in the cell projection. The protein localises to the axon. The protein resides in the dendrite. It localises to the synapse. Its subcellular location is the cytoplasm. It is found in the perinuclear region. In terms of biological role, RNA-binding protein involved in translational regulation and required for long-term memory. Required in mushroom body gamma neurons for long-term memory in male courtship. Binds to mRNA 3'-UTRs. In its monomeric form, acts as a translational repressor of genes involved in neuronal growth, synapse formation and protein turnover. In its amyloid-like oligomeric form, acts as a translational activator. The monomeric form reduces poly(A) tail length and destabilizes mRNA while the oligomeric form protects and elongates the poly(A) tail and stabilizes mRNA. Involved in asymmetric cell division in the central nervous system. Plays a role in synapse formation and morphology at neuromuscular junctions by modulating the translation of the tumor suppressor brat. Required for the progression of spermatogenesis through meiosis and for sperm differentiation. During sperm differentiation, required to asymmetrically localize and activate the translation of protein kinase aPKC mRNAs which is necessary for spermatid cyst polarization. Also required during spermatid cyst polarization for localization and translation of its own mRNA. Required for initial memory acquisition. Following subsequent late dopaminergic pathway activation, recruits isoform B into a complex to activate translation of CaMKII which is required for long-term memory consolidation. This Drosophila melanogaster (Fruit fly) protein is Translational regulator orb2.